Consider the following 1304-residue polypeptide: Angiotensin-converting enzyme (1304 aa).

An N-terminal signal peptide occupies residues 1-27; the sequence is MGAASGRRGPGLLLPLLLLLPPQPALA. Topologically, residues 28-1257 are extracellular; it reads LDPGLQPGNF…LDAQQARVGQ (1230 aa). 6 N-linked (GlcNAc...) asparagine glycosylation sites follow: Asn-36, Asn-52, Asn-72, Asn-109, Asn-144, and Asn-158. 2 Peptidase M2 domains span residues 38–622 and 641–1220; these read SADE…LGWP and VTDE…LGWP. An intrachain disulfide couples Cys-155 to Cys-163. Residue Tyr-229 coordinates chloride. The N-linked (GlcNAc...) asparagine glycan is linked to Asn-316. Cys-357 and Cys-375 are oxidised to a cystine. Residue His-388 coordinates Zn(2+). Catalysis depends on Glu-389, which acts as the Proton acceptor 1. Residues His-392 and Glu-416 each coordinate Zn(2+). N-linked (GlcNAc...) asparagine glycosylation is found at Asn-440, Asn-443, and Asn-507. The active-site Proton donor 1 is His-518. Position 527 (Arg-527) interacts with chloride. Cys-543 and Cys-555 are joined by a disulfide. A glycan (N-linked (GlcNAc...) asparagine) is linked at Asn-675. Residues Asn-693 and Asn-712 are each glycosylated (N-linked (GlcNAc...) (complex) asparagine). Cysteines 755 and 761 form a disulfide. Asn-758 carries an N-linked (GlcNAc...) asparagine glycan. 2 residues coordinate chloride: Arg-789 and Tyr-827. The N-linked (GlcNAc...) asparagine glycan is linked to Asn-940. Cysteines 955 and 973 form a disulfide. Zn(2+) is bound at residue His-986. Residue Glu-987 is the Proton acceptor 2 of the active site. Positions 990 and 1014 each coordinate Zn(2+). 2 residues coordinate chloride: Trp-1088 and Arg-1092. His-1116 (proton donor 2) is an active-site residue. Chloride is bound at residue Arg-1125. Residues Cys-1141 and Cys-1153 are joined by a disulfide bond. Asn-1189 carries an N-linked (GlcNAc...) asparagine glycan. Positions 1213 to 1254 are juxtamembrane stalk; that stretch reads HGEKLGWPQYNWTPNSARSEGPLPDSGRVSFLGLDLDAQQAR. The helical transmembrane segment at 1258 to 1274 threads the bilayer; sequence WLLLFLGIALLVATLGL. The Cytoplasmic segment spans residues 1275–1304; the sequence is SQRLFSIRHRSLHRHSHGPQFDSEVELRHS. Ser-1297 carries the post-translational modification Phosphoserine.

Belongs to the peptidase M2 family. Monomer and homodimer; homodimerizes following binding to an inhibitor. Interacts with calmodulin (CALM1, CALM2 or CALM3); interaction takes place in the cytoplasmic region and regulates phosphorylation and proteolytic cleavage. It depends on Zn(2+) as a cofactor. Chloride is required as a cofactor. Post-translationally, produced following proteolytic cleavage by secretase enzymes that cleave the transmembrane form in the juxtamembrane stalk region upstream of the transmembrane region. Cleavage can take place at different sites of the juxtamembrane stalk region. Phosphorylated by CK2 on Ser-1297; which allows membrane retention. Phosphorylated on tyrosine residues on its extracellular part, promoting cleavage by secretase enzymes and formation of the soluble form (Angiotensin-converting enzyme, soluble form).

Its subcellular location is the cell membrane. The protein localises to the cytoplasm. It localises to the secreted. The enzyme catalyses Release of a C-terminal dipeptide, oligopeptide-|-Xaa-Yaa, when Xaa is not Pro, and Yaa is neither Asp nor Glu. Thus, conversion of angiotensin I to angiotensin II, with increase in vasoconstrictor activity, but no action on angiotensin II.. The catalysed reaction is angiotensin I + H2O = L-histidyl-L-leucine + angiotensin II. It carries out the reaction bradykinin + H2O = L-Phe-L-Arg + bradykinin(1-7). It catalyses the reaction substance P + H2O = substance P(1-9) + L-Leu-L-Met-NH2. The enzyme catalyses substance P + H2O = substance P(1-8) + Gly-L-Leu-L-Met-NH2. The catalysed reaction is substance P + H2O = L-Phe-L-Phe-Gly-L-Leu-L-Met-NH2 + substance P(1-6). It carries out the reaction neurotensin + H2O = neurotensin(1-11) + L-isoleucyl-L-leucine. It catalyses the reaction goralatide + H2O = N-acetyl-L-seryl-L-aspartate + L-lysyl-L-proline. The enzyme catalyses Met-enkephalin + H2O = L-phenylalanyl-L-methionine + L-tyrosylglycylglycine. The catalysed reaction is Leu-enkephalin + H2O = L-tyrosylglycylglycine + L-phenylalanyl-L-leucine. It carries out the reaction Met-enkephalin-Arg-Phe + H2O = L-arginyl-L-phenylalanine + Met-enkephalin. The dipeptidyl carboxypeptidase activity is strongly activated by chloride. The dipeptidyl carboxypeptidase activity is specifically inhibited by lisinopril, captopril and enalaprilat. With respect to regulation, strongly inhibited by lisinopril and captopril. In terms of biological role, dipeptidyl carboxypeptidase that removes dipeptides from the C-terminus of a variety of circulating hormones, such as angiotensin I, bradykinin or enkephalins, thereby playing a key role in the regulation of blood pressure, electrolyte homeostasis or synaptic plasticity. Composed of two similar catalytic domains, each possessing a functional active site, with different selectivity for substrates. Plays a major role in the angiotensin-renin system that regulates blood pressure and sodium retention by the kidney by converting angiotensin I to angiotensin II, resulting in an increase of the vasoconstrictor activity of angiotensin. Also able to inactivate bradykinin, a potent vasodilator, and therefore enhance the blood pressure response. Acts as a regulator of synaptic transmission by mediating cleavage of neuropeptide hormones, such as substance P, neurotensin or enkephalins. Catalyzes degradation of different enkephalin neuropeptides (Met-enkephalin, Leu-enkephalin, Met-enkephalin-Arg-Phe and possibly Met-enkephalin-Arg-Gly-Leu). Acts as a regulator of synaptic plasticity in the nucleus accumbens of the brain by mediating cleavage of Met-enkephalin-Arg-Phe, a strong ligand of Mu-type opioid receptor OPRM1, into Met-enkephalin. Met-enkephalin-Arg-Phe cleavage by ACE decreases activation of OPRM1, leading to long-term synaptic potentiation of glutamate release. Also acts as a regulator of hematopoietic stem cell differentiation by mediating degradation of hemoregulatory peptide N-acetyl-SDKP (AcSDKP). Acts as a regulator of cannabinoid signaling pathway by mediating degradation of hemopressin, an antagonist peptide of the cannabinoid receptor CNR1. Involved in amyloid-beta metabolism by catalyzing degradation of Amyloid-beta protein 40 and Amyloid-beta protein 42 peptides, thereby preventing plaque formation. Catalyzes cleavage of cholecystokinin (maturation of Cholecystokinin-8 and Cholecystokinin-5) and Gonadoliberin-1 (both maturation and degradation) hormones. Degradation of hemoregulatory peptide N-acetyl-SDKP (AcSDKP) and amyloid-beta proteins is mediated by the N-terminal catalytic domain, while angiotensin I and cholecystokinin cleavage is mediated by the C-terminal catalytic region. Its function is as follows. Soluble form that is released in blood plasma and other body fluids following proteolytic cleavage in the juxtamembrane stalk region. Functionally, isoform produced by alternative promoter usage that is specifically expressed in spermatocytes and adult testis, and which is required for male fertility. In contrast to somatic isoforms, only contains one catalytic domain. Acts as a dipeptidyl carboxypeptidase that removes dipeptides from the C-terminus of substrates. The identity of substrates that are needed for male fertility is unknown. May also have a glycosidase activity which releases GPI-anchored proteins from the membrane by cleaving the mannose linkage in the GPI moiety. The GPIase activity was reported to be essential for the egg-binding ability of the sperm. This activity is however unclear and has been challenged by other groups, suggesting that it may be indirect. This chain is Angiotensin-converting enzyme, found in Pan troglodytes (Chimpanzee).